The chain runs to 217 residues: Translation initiation factor IF-3 (217 aa).

This sequence belongs to the IF-3 family. In terms of assembly, monomer.

It is found in the cytoplasm. Functionally, IF-3 binds to the 30S ribosomal subunit and shifts the equilibrium between 70S ribosomes and their 50S and 30S subunits in favor of the free subunits, thus enhancing the availability of 30S subunits on which protein synthesis initiation begins. This Synechococcus sp. (strain CC9902) protein is Translation initiation factor IF-3.